Consider the following 459-residue polypeptide: Exodeoxyribonuclease 7 large subunit (459 aa).

Belongs to the XseA family. Heterooligomer composed of large and small subunits.

It localises to the cytoplasm. The enzyme catalyses Exonucleolytic cleavage in either 5'- to 3'- or 3'- to 5'-direction to yield nucleoside 5'-phosphates.. Its function is as follows. Bidirectionally degrades single-stranded DNA into large acid-insoluble oligonucleotides, which are then degraded further into small acid-soluble oligonucleotides. This Pseudomonas fluorescens (strain SBW25) protein is Exodeoxyribonuclease 7 large subunit.